Reading from the N-terminus, the 260-residue chain is Opacity protein opA58 (260 aa).

The signal sequence occupies residues 1-23 (MNPAPKKPSLLFSSLLFSSAAQA).

The protein belongs to the opacity porin family.

Its subcellular location is the cell outer membrane. Functionally, implicated in a number of adherence functions. OPA proteins are implicated in pathogenesis and are subject to phase variation. This Neisseria gonorrhoeae protein is Opacity protein opA58 (opaJ).